The primary structure comprises 122 residues: Large ribosomal subunit protein bL17 (122 aa).

It belongs to the bacterial ribosomal protein bL17 family. As to quaternary structure, part of the 50S ribosomal subunit. Contacts protein L32.

The chain is Large ribosomal subunit protein bL17 from Nautilia profundicola (strain ATCC BAA-1463 / DSM 18972 / AmH).